A 430-amino-acid chain; its full sequence is tRNA(Ile)-lysidine synthase (430 aa).

21 to 26 (SGGLDS) contacts ATP.

It belongs to the tRNA(Ile)-lysidine synthase family.

It localises to the cytoplasm. The enzyme catalyses cytidine(34) in tRNA(Ile2) + L-lysine + ATP = lysidine(34) in tRNA(Ile2) + AMP + diphosphate + H(+). Its function is as follows. Ligates lysine onto the cytidine present at position 34 of the AUA codon-specific tRNA(Ile) that contains the anticodon CAU, in an ATP-dependent manner. Cytidine is converted to lysidine, thus changing the amino acid specificity of the tRNA from methionine to isoleucine. In Salmonella paratyphi A (strain ATCC 9150 / SARB42), this protein is tRNA(Ile)-lysidine synthase.